We begin with the raw amino-acid sequence, 638 residues long: NBPF family member NBPF6 (638 aa).

Coiled-coil stretches lie at residues 10–43 (SERA…EKFL) and 69–115 (DSVL…KLRE). Residues 157-285 (HLVHKLSPEN…VPPRHHDKSN (129 aa)) form a disordered region. Residues 165–179 (ENDEDEDEDEDDKDE) are compositionally biased toward acidic residues. Residues 174-261 (EDDKDEEVEK…EEEEALNIPP (88 aa)) enclose the Olduvai 1 domain. The segment covering 192-202 (EVQKTEEKEVP) has biased composition (basic and acidic residues). Residues 214-226 (SNSHNPSNSNQPH) are compositionally biased toward low complexity. Basic and acidic residues-rich tracts occupy residues 232 to 251 (TFKE…HPHD) and 264 to 273 (QNDHEEEEGK). Olduvai domains lie at 326-399 (EKQS…ALVD) and 400-503 (KIKK…SQAQ). The disordered stretch occupies residues 563 to 584 (MKNPPQLEDDALEGSASNTQGR).

Belongs to the NBPF family.

It is found in the cytoplasm. This is NBPF family member NBPF6 from Homo sapiens (Human).